Here is a 368-residue protein sequence, read N- to C-terminus: Germination protease (368 aa).

Positions 1-15 are excised as a propeptide; sequence MKEPLDLSKYSVRTD.

Belongs to the peptidase A25 family. As to quaternary structure, homotetramer. In terms of processing, autoproteolytically processed. The inactive tetrameric zymogen termed p46 autoprocesses to a smaller form termed p41, which is active only during spore germination.

It catalyses the reaction Endopeptidase action with P4 Glu or Asp, P1 preferably Glu &gt; Asp, P1' hydrophobic and P2' Ala.. In terms of biological role, initiates the rapid degradation of small, acid-soluble proteins during spore germination. The chain is Germination protease from Bacillus anthracis (strain A0248).